A 328-amino-acid polypeptide reads, in one-letter code: uncharacterized protein (328 aa).

A signal peptide spans 1–24 (MKSIKGLGKLLLASSILFSSSAFA).

It belongs to the bacterial solute-binding protein 7 family.

It is found in the periplasm. This is an uncharacterized protein from Haemophilus influenzae (strain ATCC 51907 / DSM 11121 / KW20 / Rd).